A 109-amino-acid polypeptide reads, in one-letter code: Fluoride-specific ion channel FluC 1 (109 aa).

Transmembrane regions (helical) follow at residues 1 to 21 (MVIV…YFFS), 29 to 49 (LPLG…VFYN), 55 to 75 (EVYA…STLN), and 87 to 107 (VFYS…FLGI). Gly-66 and Thr-69 together coordinate Na(+).

It belongs to the fluoride channel Fluc/FEX (TC 1.A.43) family.

Its subcellular location is the cell membrane. It carries out the reaction fluoride(in) = fluoride(out). With respect to regulation, na(+) is not transported, but it plays an essential structural role and its presence is essential for fluoride channel function. Functionally, fluoride-specific ion channel. Important for reducing fluoride concentration in the cell, thus reducing its toxicity. This Streptococcus pneumoniae serotype 4 (strain ATCC BAA-334 / TIGR4) protein is Fluoride-specific ion channel FluC 1.